A 623-amino-acid polypeptide reads, in one-letter code: Zinc finger protein 131 (623 aa).

Positions 34–98 constitute a BTB domain; it reads TDITLIVDGH…TYTAKLMIQG (65 aa). The short motif at 137-148 is the Nuclear localization signal 1 element; that stretch reads TGKNEAKKRKIA. 3 C2H2-type zinc fingers span residues 261 to 283, 288 to 311, and 328 to 350; these read FHCE…MKSH, FKCE…NCYH, and HVCQ…LRKH. Glycyl lysine isopeptide (Lys-Gly) (interchain with G-Cter in SUMO2) cross-links involve residues Lys-289 and Lys-295. A Nuclear localization signal 2 motif is present at residues 317–328; sequence VSKKQRTGKKIH. The C2H2-type 4; degenerate zinc finger occupies 356–381; it reads FECPNCHERFARNSTLKCHLTACQTG. 2 consecutive C2H2-type zinc fingers follow at residues 392–414 and 420–443; these read YECQ…LVIH and NHCT…SDAH. A compositionally biased stretch (basic and acidic residues) spans 573–617; that stretch reads NQEERESSQADAAEAAREDHEDAEDLETKPTVDSEAEKAENEDRT. The disordered stretch occupies residues 573 to 623; sequence NQEERESSQADAAEAAREDHEDAEDLETKPTVDSEAEKAENEDRTALPVLE. Lys-601 participates in a covalent cross-link: Glycyl lysine isopeptide (Lys-Gly) (interchain with G-Cter in SUMO).

The protein belongs to the krueppel C2H2-type zinc-finger protein family. In terms of processing, monosumoylated at Lys-601 by CBX4 and UHRF2. Sumoylation may potentiate ZNF131 inhibition of estrogen signaling. Sumoylation does not interfere with ubiquitination. Ubiquitinated. In terms of tissue distribution, predominant expression is found in different brain areas such as the occipital and temporal lobe, the nucleus caudatus, hippocampus, and the cerebellum as well as in testis and thymus.

The protein resides in the nucleus. Its function is as follows. Plays a role during development and organogenesis as well as in the function of the adult central nervous system. May be involved in transcriptional regulation as a repressor of ESR1/ER-alpha signaling. The sequence is that of Zinc finger protein 131 (ZNF131) from Homo sapiens (Human).